The following is a 407-amino-acid chain: MTNKVNSYGWKALIGSAVGYGMDGFDLLILGFMLSAISADLNLTPAQGGSLVTWTLIGAVFGGILFGALSDKYGRVRVLTWTILLFAVFTGLCAIAQGYWDLLIYRTIAGIGLGGEFGIGMALAAEAWPARHRAKAASYVALGWQVGVLGAALLTPLLLPHIGWRGMFLVGIFPAFVAWFLRSHLHEPEIFTQKQTALSTQSSFTDKLRSFQLLIKDKATSKISLGIVVLTSVQNFGYYGIMIWLPNFLSKQLGFSLTKSGLWTAVTVCGMMAGIWIFGQLADRIGRKPSFLLFQLGAVISIVVYSQLTDPDIMLLAGAFLGMFVNGMLGGYGALMAEAYPTEARATAQNVLFNIGRAVGGFGPVVVGSVVLAYSFQTAIALLAIIYVIDMLATIFLIPELKGKALD.

Topologically, residues 1 to 16 (MTNKVNSYGWKALIGS) are cytoplasmic. A helical membrane pass occupies residues 17–37 (AVGYGMDGFDLLILGFMLSAI). At 38–48 (SADLNLTPAQG) the chain is on the periplasmic side. Residues 49–69 (GSLVTWTLIGAVFGGILFGAL) traverse the membrane as a helical segment. Topologically, residues 70-77 (SDKYGRVR) are cytoplasmic. The chain crosses the membrane as a helical span at residues 78-98 (VLTWTILLFAVFTGLCAIAQG). The Periplasmic segment spans residues 99-107 (YWDLLIYRT). A helical membrane pass occupies residues 108–128 (IAGIGLGGEFGIGMALAAEAW). The Cytoplasmic portion of the chain corresponds to 129–138 (PARHRAKAAS). Residues 139–159 (YVALGWQVGVLGAALLTPLLL) traverse the membrane as a helical segment. Proline 160 is a topological domain (periplasmic). The helical transmembrane segment at 161–181 (HIGWRGMFLVGIFPAFVAWFL) threads the bilayer. At 182–224 (RSHLHEPEIFTQKQTALSTQSSFTDKLRSFQLLIKDKATSKIS) the chain is on the cytoplasmic side. A helical membrane pass occupies residues 225 to 245 (LGIVVLTSVQNFGYYGIMIWL). Over 246–261 (PNFLSKQLGFSLTKSG) the chain is Periplasmic. The chain crosses the membrane as a helical span at residues 262–282 (LWTAVTVCGMMAGIWIFGQLA). Residues 283 to 288 (DRIGRK) are Cytoplasmic-facing. Residues 289-309 (PSFLLFQLGAVISIVVYSQLT) form a helical membrane-spanning segment. Residues 310-312 (DPD) lie on the Periplasmic side of the membrane. A helical membrane pass occupies residues 313–333 (IMLLAGAFLGMFVNGMLGGYG). Topologically, residues 334 to 357 (ALMAEAYPTEARATAQNVLFNIGR) are cytoplasmic. The next 2 helical transmembrane spans lie at 358 to 378 (AVGG…SFQT) and 379 to 399 (AIAL…FLIP). Over 400–407 (ELKGKALD) the chain is Cytoplasmic.

This sequence belongs to the major facilitator superfamily. Aromatic acid:H(+) symporter (AAHS) (TC 2.A.1.15) family.

The protein localises to the cell inner membrane. In Haemophilus influenzae (strain ATCC 51907 / DSM 11121 / KW20 / Rd), this protein is Putative metabolite transport protein HI_1104.